We begin with the raw amino-acid sequence, 695 residues long: Elongation factor G (695 aa).

The 275-residue stretch at 8–282 folds into the tr-type G domain; it reads EKTRNIGIMA…AVLDYLPAPT (275 aa). GTP contacts are provided by residues 17–24, 81–85, and 135–138; these read AHIDAGKT, DTPGH, and NKMD.

Belongs to the TRAFAC class translation factor GTPase superfamily. Classic translation factor GTPase family. EF-G/EF-2 subfamily.

Its subcellular location is the cytoplasm. Its function is as follows. Catalyzes the GTP-dependent ribosomal translocation step during translation elongation. During this step, the ribosome changes from the pre-translocational (PRE) to the post-translocational (POST) state as the newly formed A-site-bound peptidyl-tRNA and P-site-bound deacylated tRNA move to the P and E sites, respectively. Catalyzes the coordinated movement of the two tRNA molecules, the mRNA and conformational changes in the ribosome. This is Elongation factor G from Listeria monocytogenes serotype 4b (strain CLIP80459).